We begin with the raw amino-acid sequence, 179 residues long: Large ribosomal subunit protein uL5 (179 aa).

This sequence belongs to the universal ribosomal protein uL5 family. Part of the 50S ribosomal subunit; part of the 5S rRNA/L5/L18/L25 subcomplex. Contacts the 5S rRNA and the P site tRNA. Forms a bridge to the 30S subunit in the 70S ribosome.

Functionally, this is one of the proteins that bind and probably mediate the attachment of the 5S RNA into the large ribosomal subunit, where it forms part of the central protuberance. In the 70S ribosome it contacts protein S13 of the 30S subunit (bridge B1b), connecting the 2 subunits; this bridge is implicated in subunit movement. Contacts the P site tRNA; the 5S rRNA and some of its associated proteins might help stabilize positioning of ribosome-bound tRNAs. This Natranaerobius thermophilus (strain ATCC BAA-1301 / DSM 18059 / JW/NM-WN-LF) protein is Large ribosomal subunit protein uL5.